The chain runs to 356 residues: Methionine import ATP-binding protein MetN (356 aa).

The ABC transporter domain maps to Ile7–Ile250. Position 43-50 (Gly43–Ser50) interacts with ATP.

Belongs to the ABC transporter superfamily. Methionine importer (TC 3.A.1.24) family. In terms of assembly, the complex is composed of two ATP-binding proteins (MetN), two transmembrane proteins (MetI) and a solute-binding protein (MetQ).

The protein localises to the cell membrane. It catalyses the reaction L-methionine(out) + ATP + H2O = L-methionine(in) + ADP + phosphate + H(+). The enzyme catalyses D-methionine(out) + ATP + H2O = D-methionine(in) + ADP + phosphate + H(+). Part of the ABC transporter complex MetNIQ involved in methionine import. Responsible for energy coupling to the transport system. The protein is Methionine import ATP-binding protein MetN of Streptococcus agalactiae serotype Ia (strain ATCC 27591 / A909 / CDC SS700).